A 453-amino-acid polypeptide reads, in one-letter code: Pup--protein ligase (453 aa).

Glu9 provides a ligand contact to Mg(2+). Residue Arg53 participates in ATP binding. Position 55 (Tyr55) interacts with Mg(2+). The active-site Proton acceptor is the Asp57. Glu63 serves as a coordination point for Mg(2+). ATP is bound by residues Thr66 and Trp420.

Belongs to the Pup ligase/Pup deamidase family. Pup-conjugating enzyme subfamily.

The catalysed reaction is ATP + [prokaryotic ubiquitin-like protein]-L-glutamate + [protein]-L-lysine = ADP + phosphate + N(6)-([prokaryotic ubiquitin-like protein]-gamma-L-glutamyl)-[protein]-L-lysine.. Its pathway is protein degradation; proteasomal Pup-dependent pathway. The protein operates within protein modification; protein pupylation. Functionally, catalyzes the covalent attachment of the prokaryotic ubiquitin-like protein modifier Pup to the proteasomal substrate proteins, thereby targeting them for proteasomal degradation. This tagging system is termed pupylation. The ligation reaction involves the side-chain carboxylate of the C-terminal glutamate of Pup and the side-chain amino group of a substrate lysine. The protein is Pup--protein ligase of Streptomyces scabiei (strain 87.22).